We begin with the raw amino-acid sequence, 165 residues long: Phosphopantetheine adenylyltransferase (165 aa).

S11 provides a ligand contact to substrate. ATP is bound by residues 11-12 (SF) and H19. Substrate is bound by residues K43, T76, and R90. ATP is bound by residues 91 to 93 (GIR), E101, and 126 to 132 (FSFISSS).

This sequence belongs to the bacterial CoaD family. Homohexamer. It depends on Mg(2+) as a cofactor.

It localises to the cytoplasm. The catalysed reaction is (R)-4'-phosphopantetheine + ATP + H(+) = 3'-dephospho-CoA + diphosphate. Its pathway is cofactor biosynthesis; coenzyme A biosynthesis; CoA from (R)-pantothenate: step 4/5. Its function is as follows. Reversibly transfers an adenylyl group from ATP to 4'-phosphopantetheine, yielding dephospho-CoA (dPCoA) and pyrophosphate. In Latilactobacillus sakei subsp. sakei (strain 23K) (Lactobacillus sakei subsp. sakei), this protein is Phosphopantetheine adenylyltransferase.